Consider the following 733-residue polypeptide: Probable Rho-GTPase-activating protein 6 (733 aa).

Polar residues predominate over residues Val116–Pro125. The disordered stretch occupies residues Val116 to Thr135. Phosphothreonine is present on Thr141. The tract at residues Arg174–Arg256 is disordered. Positions Ser179–Ser195 are enriched in low complexity. Polar residues-rich tracts occupy residues His196–Thr218 and Pro225–Asp240. The 235-residue stretch at Thr312 to Leu546 folds into the Rho-GAP domain. The tract at residues Pro692–Ser713 is disordered. Residues Lys704–Ser713 are compositionally biased toward basic residues.

The chain is Probable Rho-GTPase-activating protein 6 (rga6) from Schizosaccharomyces pombe (strain 972 / ATCC 24843) (Fission yeast).